Reading from the N-terminus, the 423-residue chain is TPR repeat-containing protein YpiA (423 aa).

TPR repeat units lie at residues 33–66, 67–100, 135–168, 171–204, 238–271, 272–305, 306–339, 340–373, and 374–407; these read DEDK…YPNE, TELT…DPSY, PVID…QSEI, VNVH…NPDP, TSLY…DEYN, KELF…DPGF, VEAL…GEED, PKYN…YRED, and RDFL…DGAN.

Interacts with the RNA polymerase core.

The sequence is that of TPR repeat-containing protein YpiA (ypiA) from Bacillus subtilis (strain 168).